The chain runs to 571 residues: E3 ubiquitin-protein ligase CHFR (571 aa).

The segment at 1–21 (MERPEEGKQSPPPQPWGRLLR) is disordered. The 52-residue stretch at 38 to 89 (WTIGRRRGCDLSFPSNKLVSGDHCRIAVDEKSGQVTLEDTSTSGTVINKLKV) folds into the FHA domain. Residues 113-138 (EHRSGGGGISPKGSGPSVASDEVSSF) form a disordered region. Ser152 carries the post-translational modification Phosphoserine. An RING-type zinc finger spans residues 212-251 (CIICQDLLHDCVSLQPCMHTFCAACYSGWMERSSLCPTCR). Thr294 carries the post-translational modification Phosphothreonine. Residues 297-325 (MLQPKVRRSFSDEEGSSEDLLELSDVDSE) are disordered. Residues 308–325 (DEEGSSEDLLELSDVDSE) show a composition bias toward acidic residues. The PBZ-type zinc finger occupies 540–562 (PDCYWGRNCRTQVKAHHAMKFNH).

It belongs to the CHFR family. As to quaternary structure, interacts with HDAC1 and HDAC2. Interacts with PML (with sumoylated form of PML). Post-translationally, poly-ADP-ribosylated. In addition to binding non covalently poly(ADP-ribose) via its PBZ-type zinc finger, the protein is also covalently poly-ADP-ribosylated by PARP1. In terms of processing, autoubiquitinated; may regulate its cellular level. Phosphorylated by PKB. Phosphorylation may affect its E3 ligase activity.

The protein resides in the nucleus. The protein localises to the PML body. The enzyme catalyses S-ubiquitinyl-[E2 ubiquitin-conjugating enzyme]-L-cysteine + [acceptor protein]-L-lysine = [E2 ubiquitin-conjugating enzyme]-L-cysteine + N(6)-ubiquitinyl-[acceptor protein]-L-lysine.. It participates in protein modification; protein ubiquitination. Its function is as follows. E3 ubiquitin-protein ligase that functions in the antephase checkpoint by actively delaying passage into mitosis in response to microtubule poisons. Acts in early prophase before chromosome condensation, when the centrosome move apart from each other along the periphery of the nucleus. Probably involved in signaling the presence of mitotic stress caused by microtubule poisons by mediating the 'Lys-48'-linked ubiquitination of target proteins, leading to their degradation by the proteasome. Promotes the ubiquitination and subsequent degradation of AURKA and PLK1. Probably acts as a tumor suppressor, possibly by mediating the polyubiquitination of HDAC1, leading to its degradation. May also promote the formation of 'Lys-63'-linked polyubiquitin chains and functions with the specific ubiquitin-conjugating UBC13-MMS2 (UBE2N-UBE2V2) heterodimer. Substrates that are polyubiquitinated at 'Lys-63' are usually not targeted for degradation, but are rather involved in signaling cellular stress. This Pongo abelii (Sumatran orangutan) protein is E3 ubiquitin-protein ligase CHFR (CHFR).